The following is a 596-amino-acid chain: Leucine zipper putative tumor suppressor 1 (596 aa).

Residue Gly2 is the site of N-myristoyl glycine attachment. 2 disordered regions span residues 136-193 (AILH…SYQL) and 295-324 (YEER…SQKS). Residues 153–162 (PPDKPKEQEL) show a composition bias toward basic and acidic residues. Residues 178–190 (SMSSLPTHSTSSS) show a composition bias toward low complexity. The stretch at 256–374 (ISTDECSIQE…SYEREKTSFG (119 aa)) forms a coiled coil. Residues 295 to 310 (YEERPRRCRDELEGPE) are compositionally biased toward basic and acidic residues.

This sequence belongs to the LZTS family. As to quaternary structure, binds EEF1G, TLK2 and CDK1. In terms of processing, phosphorylated on serine residues. Hyperphosphorylated by the cAMP-dependent kinase PKA during cell-cycle progression. As to expression, highly expressed in testis, prostate, spleen, thymus, ovary and brain. Detected at lower levels in heart, placenta, small intestine, colon, liver, kidney, skeletal muscle and pancreas. Not detectable in primary tumors from breast and prostate and in many cancer cell lines.

Its subcellular location is the cytoplasm. The protein localises to the cell membrane. The protein resides in the cell projection. It localises to the dendritic spine. It is found in the postsynaptic density. Its subcellular location is the synapse. Its function is as follows. Involved in the regulation of cell growth. May stabilize the active CDC2-cyclin B1 complex and thereby contribute to the regulation of the cell cycle and the prevention of uncontrolled cell proliferation. May act as a tumor suppressor. This chain is Leucine zipper putative tumor suppressor 1 (LZTS1), found in Homo sapiens (Human).